Here is a 284-residue protein sequence, read N- to C-terminus: Neutral protease 2 homolog AFLA_119780 (284 aa).

Disulfide bonds link Cys113/Cys185 and Cys192/Cys210. Zn(2+) is bound at residue His235. Glu236 is an active-site residue. 2 residues coordinate Zn(2+): His239 and Asp250.

This sequence belongs to the peptidase M35 family. Zn(2+) is required as a cofactor.

It localises to the secreted. The catalysed reaction is Preferential cleavage of bonds with hydrophobic residues in P1'. Also 3-Asn-|-Gln-4 and 8-Gly-|-Ser-9 bonds in insulin B chain.. Functionally, secreted metalloproteinase that allows assimilation of proteinaceous substrates. Shows high activities on basic nuclear substrates such as histone and protamine. The protein is Neutral protease 2 homolog AFLA_119780 of Aspergillus flavus (strain ATCC 200026 / FGSC A1120 / IAM 13836 / NRRL 3357 / JCM 12722 / SRRC 167).